The chain runs to 117 residues: Large ribosomal subunit protein bL17 (117 aa).

It belongs to the bacterial ribosomal protein bL17 family. In terms of assembly, part of the 50S ribosomal subunit. Contacts protein L32.

In Coprothermobacter proteolyticus (strain ATCC 35245 / DSM 5265 / OCM 4 / BT), this protein is Large ribosomal subunit protein bL17.